Here is a 122-residue protein sequence, read N- to C-terminus: Large ribosomal subunit protein uL14 (122 aa).

This sequence belongs to the universal ribosomal protein uL14 family. As to quaternary structure, part of the 50S ribosomal subunit. Forms a cluster with proteins L3 and L19. In the 70S ribosome, L14 and L19 interact and together make contacts with the 16S rRNA in bridges B5 and B8.

Binds to 23S rRNA. Forms part of two intersubunit bridges in the 70S ribosome. This is Large ribosomal subunit protein uL14 from Chlamydia trachomatis serovar L2 (strain ATCC VR-902B / DSM 19102 / 434/Bu).